A 297-amino-acid chain; its full sequence is 5'-3' exonuclease (297 aa).

The region spanning 171–262 (EPDQIVDFKA…MKLEKELFAI (92 aa)) is the 5'-3' exonuclease domain.

5'-3' exonuclease acting preferentially on double-stranded DNA. This Mycoplasmopsis pulmonis (strain UAB CTIP) (Mycoplasma pulmonis) protein is 5'-3' exonuclease (polA).